Reading from the N-terminus, the 69-residue chain is Large ribosomal subunit protein uL29 (69 aa).

The protein belongs to the universal ribosomal protein uL29 family.

The sequence is that of Large ribosomal subunit protein uL29 from Oenococcus oeni (strain ATCC BAA-331 / PSU-1).